Consider the following 36-residue polypeptide: Photosystem I reaction center subunit VIII (36 aa).

Residues 10 to 29 traverse the membrane as a helical segment; the sequence is FVPLVGLVFPAIAMASLFLY.

It belongs to the PsaI family.

The protein localises to the plastid. It is found in the chloroplast thylakoid membrane. In terms of biological role, may help in the organization of the PsaL subunit. In Oryza nivara (Indian wild rice), this protein is Photosystem I reaction center subunit VIII.